The sequence spans 391 residues: Testis-expressed protein 9 (391 aa).

2 disordered regions span residues 1 to 31 and 65 to 85; these read MAGRSLCLTRSSVPGTPFPPPVQQPSTPGPD and QEVRSRPVSTQMKSCDDEDDY. Residues 188-351 are a coiled coil; that stretch reads IGTEAQIRFL…EKQKGELMIG (164 aa).

The protein localises to the cytoplasm. It localises to the cytoskeleton. It is found in the microtubule organizing center. The protein resides in the centrosome. Its subcellular location is the centriolar satellite. The protein is Testis-expressed protein 9 (TEX9) of Homo sapiens (Human).